A 327-amino-acid chain; its full sequence is MVKKIGVLTSGGDAPGMNAAIRGVVRAALSAGLDVFGIEDGYLGLYENRMKKLDRYSVSDMINRGGTFLGSARFPEFRDPEVRKVALKNMHERGIDGLVVIGGDGSYAGADLLTKEGGIHCVGLPGTIDNDVAGTDYTIGFFTALETVVEAIDRLRDTSSSHQRISIVEVMGRYCGDLTLAAAIAGGCEFIAIPEVEFKRDDLVAEIKAGIAKGKKHAIVAITEKLDDIDSLAKYIEKETGRETRGTVLGHIQRGGAPVAYDRILASRMGAYAVDLLLQDHDYKKGGFCVGVQNEKMVHELISVCIAPENKKSKFKEDWYDTAKKLF.

An ATP-binding site is contributed by Gly-12. ADP contacts are provided by residues 22–26 (RGVVR) and 55–60 (RYSVSD). Residues 73–74 (RF) and 103–106 (GDGS) each bind ATP. Asp-104 contributes to the Mg(2+) binding site. A substrate-binding site is contributed by 127-129 (TID). Asp-129 functions as the Proton acceptor in the catalytic mechanism. An ADP-binding site is contributed by Arg-156. Substrate contacts are provided by residues Arg-164 and 171-173 (MGR). ADP-binding positions include 187–189 (GCE), Lys-213, and 215–217 (KKH). Residues Glu-224, Arg-245, and 251–254 (HIQR) contribute to the substrate site.

The protein belongs to the phosphofructokinase type A (PFKA) family. ATP-dependent PFK group I subfamily. Prokaryotic clade 'B1' sub-subfamily. In terms of assembly, homotetramer. Mg(2+) is required as a cofactor.

The protein resides in the cytoplasm. The catalysed reaction is beta-D-fructose 6-phosphate + ATP = beta-D-fructose 1,6-bisphosphate + ADP + H(+). The protein operates within carbohydrate degradation; glycolysis; D-glyceraldehyde 3-phosphate and glycerone phosphate from D-glucose: step 3/4. Its activity is regulated as follows. Allosterically activated by ADP and other diphosphonucleosides, and allosterically inhibited by phosphoenolpyruvate. In terms of biological role, catalyzes the phosphorylation of D-fructose 6-phosphate to fructose 1,6-bisphosphate by ATP, the first committing step of glycolysis. This is ATP-dependent 6-phosphofructokinase from Yersinia pseudotuberculosis serotype O:1b (strain IP 31758).